A 57-amino-acid chain; its full sequence is Large ribosomal subunit protein bL32 (57 aa).

The tract at residues 1–21 (MAVQQRRSSKHRRDKRRSHDA) is disordered. Over residues 7-18 (RSSKHRRDKRRS) the composition is skewed to basic residues.

The protein belongs to the bacterial ribosomal protein bL32 family.

This Mycoplasma pneumoniae (strain ATCC 29342 / M129 / Subtype 1) (Mycoplasmoides pneumoniae) protein is Large ribosomal subunit protein bL32 (rpmF).